A 540-amino-acid chain; its full sequence is Probable G-protein coupled receptor 75 (540 aa).

The Extracellular portion of the chain corresponds to 1 to 46 (MNTSAPLQNVPNATLLNMPPLHGGNSTSLQEGLRDFIHTATLVTCT). N-linked (GlcNAc...) asparagine glycosylation is found at Asn-2 and Asn-25. A helical transmembrane segment spans residues 47–67 (FLLAIIFCLGSYGNFIVFLSF). Topologically, residues 68-86 (FDPSFRKFRTNFDFMILNL) are cytoplasmic. A helical transmembrane segment spans residues 87–107 (SFCDLFICGVTAPMFTFVLFF). Residues 108-120 (SSASSIPDSFCFT) lie on the Extracellular side of the membrane. Residues 121–141 (FHLTSSGFVIMSLKMVAVIAL) traverse the membrane as a helical segment. Topologically, residues 142–160 (HRLRMVMGKQPNCTASFSC) are cytoplasmic. The chain crosses the membrane as a helical span at residues 161 to 181 (ILLLTLLLWATSFTLATLATL). Over 182 to 205 (RTNKSHLCLPMSSLMDGEGKAILS) the chain is Extracellular. N-linked (GlcNAc...) asparagine glycosylation is present at Asn-184. A helical transmembrane segment spans residues 206-226 (LYVVDFTFCVAVVSVSYIMIA). At 227–318 (QTLRKNAQVK…INFSTAKDSK (92 aa)) the chain is on the cytoplasmic side. A helical membrane pass occupies residues 319–339 (AVVTCVVIVLSVLVCCLPLGI). Topologically, residues 340-350 (SLVQMVLSDNG) are extracellular. A helical transmembrane segment spans residues 351-371 (SFILYQFELFGFTLIFFKSGL). The Cytoplasmic portion of the chain corresponds to 372-540 (NPFIYSRNSA…SAKQIPIPSV (169 aa)). Positions 443–475 (DQACGPSHSKESAASPKVSAGHQPCGQSSSTPI) are disordered.

The protein belongs to the G-protein coupled receptor 1 family. As to expression, highly expressed in brain and heart. Also detected in skeletal muscle, liver and kidney. Also expressed by islet cells (at protein level).

It localises to the cell membrane. Functionally, g protein-coupled receptor that is activated by the chemokine CCL5/RANTES. Probably coupled to heterotrimeric Gq proteins, it stimulates inositol trisphosphate production and calcium mobilization upon activation. Together with CCL5/RANTES, may play a role in neuron survival through activation of a downstream signaling pathway involving the PI3, Akt and MAP kinases. CCL5/RANTES may also regulate insulin secretion by pancreatic islet cells through activation of this receptor. This is Probable G-protein coupled receptor 75 (Gpr75) from Mus musculus (Mouse).